A 217-amino-acid chain; its full sequence is MHHIVQFLQTNGGELLYKTYEHITISLIAVILGVLVAVPLGVVLTRMKKGAGTIIGIVNIIQTLPSLAILAFFIPLLGVGKVPAIVALFFYSVLPILRNTYTGIRGVNKNLLESGKGIGMTPAEQVRLVELPLAAPVIMAGIRTSTIYLIGWATLASFIGGGGLGDYIFIGLNLYQPEYIIGGAVPVTILAIVIDYVLAVAERKLTPAGMQRLKELS.

An ABC transmembrane type-1 domain is found at 19-198; sequence TYEHITISLI…ILAIVIDYVL (180 aa). 6 consecutive transmembrane segments (helical) span residues 23–43, 52–74, 84–101, 128–148, 150–170, and 180–200; these read ITISLIAVILGVLVAVPLGVV, GTIIGIVNIIQTLPSLAILAFFI, AIVALFFYSVLPILRNTY, LVELPLAAPVIMAGIRTSTIY, IGWATLASFIGGGGLGDYIFI, and IIGGAVPVTILAIVIDYVLAV.

Belongs to the binding-protein-dependent transport system permease family. CysTW subfamily.

The protein resides in the cell membrane. Involved in a high affinity multicomponent binding-protein-dependent transport system for choline; probably responsible for the translocation of the substrate across the membrane. This is Choline transport system permease protein OpuBB (opuBB) from Bacillus subtilis (strain 168).